The primary structure comprises 353 residues: Photosystem II D2 protein (353 aa).

An N-acetylthreonine modification is found at Thr2. The residue at position 2 (Thr2) is a Phosphothreonine. The chain crosses the membrane as a helical span at residues 41-61 (CAYFAVGGWFTGTTFVTSWYT). His118 is a chlorophyll a binding site. A helical transmembrane segment spans residues 125–141 (GFMLRQFELARSVQLRP). Gln130 and Asn143 together coordinate pheophytin a. The chain crosses the membrane as a helical span at residues 153 to 166 (VFVSVFLIYPLGQS). A chlorophyll a-binding site is contributed by His198. The chain crosses the membrane as a helical span at residues 208 to 228 (AALLCAIHGATVENTLFEDGD). The a plastoquinone site is built by His215 and Phe262. His215 contributes to the Fe cation binding site. Position 269 (His269) interacts with Fe cation. Residues 279-295 (GLWMSALGVVGLALNLR) traverse the membrane as a helical segment.

This sequence belongs to the reaction center PufL/M/PsbA/D family. In terms of assembly, PSII is composed of 1 copy each of membrane proteins PsbA, PsbB, PsbC, PsbD, PsbE, PsbF, PsbH, PsbI, PsbJ, PsbK, PsbL, PsbM, PsbT, PsbX, PsbY, PsbZ, Psb30/Ycf12, at least 3 peripheral proteins of the oxygen-evolving complex and a large number of cofactors. It forms dimeric complexes. It depends on The D1/D2 heterodimer binds P680, chlorophylls that are the primary electron donor of PSII, and subsequent electron acceptors. It shares a non-heme iron and each subunit binds pheophytin, quinone, additional chlorophylls, carotenoids and lipids. There is also a Cl(-1) ion associated with D1 and D2, which is required for oxygen evolution. The PSII complex binds additional chlorophylls, carotenoids and specific lipids. as a cofactor.

Its subcellular location is the plastid. The protein localises to the chloroplast thylakoid membrane. It catalyses the reaction 2 a plastoquinone + 4 hnu + 2 H2O = 2 a plastoquinol + O2. Its function is as follows. Photosystem II (PSII) is a light-driven water:plastoquinone oxidoreductase that uses light energy to abstract electrons from H(2)O, generating O(2) and a proton gradient subsequently used for ATP formation. It consists of a core antenna complex that captures photons, and an electron transfer chain that converts photonic excitation into a charge separation. The D1/D2 (PsbA/PsbD) reaction center heterodimer binds P680, the primary electron donor of PSII as well as several subsequent electron acceptors. D2 is needed for assembly of a stable PSII complex. This Nicotiana tabacum (Common tobacco) protein is Photosystem II D2 protein.